Here is a 180-residue protein sequence, read N- to C-terminus: tRNA (cytidine(56)-2'-O)-methyltransferase (180 aa).

Residues Leu85, 114-118 (GAEKV), and 132-139 (VGNQPHSE) contribute to the S-adenosyl-L-methionine site.

It belongs to the aTrm56 family. As to quaternary structure, homodimer.

Its subcellular location is the cytoplasm. The enzyme catalyses cytidine(56) in tRNA + S-adenosyl-L-methionine = 2'-O-methylcytidine(56) in tRNA + S-adenosyl-L-homocysteine + H(+). Its function is as follows. Specifically catalyzes the AdoMet-dependent 2'-O-ribose methylation of cytidine at position 56 in tRNAs. This is tRNA (cytidine(56)-2'-O)-methyltransferase from Thermococcus kodakarensis (strain ATCC BAA-918 / JCM 12380 / KOD1) (Pyrococcus kodakaraensis (strain KOD1)).